The sequence spans 87 residues: Exodeoxyribonuclease 7 small subunit (87 aa).

Belongs to the XseB family. Heterooligomer composed of large and small subunits.

The protein localises to the cytoplasm. It carries out the reaction Exonucleolytic cleavage in either 5'- to 3'- or 3'- to 5'-direction to yield nucleoside 5'-phosphates.. In terms of biological role, bidirectionally degrades single-stranded DNA into large acid-insoluble oligonucleotides, which are then degraded further into small acid-soluble oligonucleotides. The protein is Exodeoxyribonuclease 7 small subunit of Pelotomaculum thermopropionicum (strain DSM 13744 / JCM 10971 / SI).